We begin with the raw amino-acid sequence, 554 residues long: Dihydroxy-acid dehydratase (554 aa).

Asp78 is a Mg(2+) binding site. Residue Cys119 participates in [2Fe-2S] cluster binding. Asp120 and Lys121 together coordinate Mg(2+). Lys121 carries the post-translational modification N6-carboxylysine. Position 191 (Cys191) interacts with [2Fe-2S] cluster. Glu442 serves as a coordination point for Mg(2+). Catalysis depends on Ser468, which acts as the Proton acceptor.

It belongs to the IlvD/Edd family. In terms of assembly, homodimer. It depends on [2Fe-2S] cluster as a cofactor. Mg(2+) serves as cofactor.

It catalyses the reaction (2R)-2,3-dihydroxy-3-methylbutanoate = 3-methyl-2-oxobutanoate + H2O. The catalysed reaction is (2R,3R)-2,3-dihydroxy-3-methylpentanoate = (S)-3-methyl-2-oxopentanoate + H2O. Its pathway is amino-acid biosynthesis; L-isoleucine biosynthesis; L-isoleucine from 2-oxobutanoate: step 3/4. It functions in the pathway amino-acid biosynthesis; L-valine biosynthesis; L-valine from pyruvate: step 3/4. Its function is as follows. Functions in the biosynthesis of branched-chain amino acids. Catalyzes the dehydration of (2R,3R)-2,3-dihydroxy-3-methylpentanoate (2,3-dihydroxy-3-methylvalerate) into 2-oxo-3-methylpentanoate (2-oxo-3-methylvalerate) and of (2R)-2,3-dihydroxy-3-methylbutanoate (2,3-dihydroxyisovalerate) into 2-oxo-3-methylbutanoate (2-oxoisovalerate), the penultimate precursor to L-isoleucine and L-valine, respectively. The polypeptide is Dihydroxy-acid dehydratase (Hydrogenobaculum sp. (strain Y04AAS1)).